Consider the following 365-residue polypeptide: MLVKPSIISGLVRLTSHSPSSSSSVLRRQEFLVRTLCGSPIIRAMSSTSEADAESVLRTVTPSLDLKRHKGQAGKIAVIGGCREYTGAPYFAAISALKIGADLSHVFCTKDAAPVIKSYSPELIVHPVLEESYSISQLSEEDKREVQDKVLGEVGKWMERFDCLVIGPGLGRDPFLLECVSIIMLLAKKSNVPFVIDGDGLFLVTNSIDLVHSYPLAVLTPNVNEYKRLVQKVLNCEVDEQNAEDQLRSLAKQIGGVTILRKGKSDLISNGETVKSVSIYGSPRRCGGQGDILSGGVAVFLSWAQQLKSDPESPSENPAILGCIAASGLLRKAASLAFTKHKRSTLTSDIIECLGESLEDICPAS.

A chloroplast-targeting transit peptide spans 1–43; it reads MLVKPSIISGLVRLTSHSPSSSSSVLRRQEFLVRTLCGSPIIR. Leu2 carries the post-translational modification N-acetylserine. A YjeF C-terminal domain is found at 53 to 361; it reads AESVLRTVTP…ECLGESLEDI (309 aa). (6S)-NADPHX is bound by residues Gly169 and 222 to 228; that span reads NVNEYKR. ATP is bound by residues 262-266 and 281-290; these read KGKSD and GSPRRCGGQG. Asp291 serves as a coordination point for (6S)-NADPHX.

It belongs to the NnrD/CARKD family. Requires Mg(2+) as cofactor.

Its subcellular location is the plastid. The protein localises to the chloroplast. It is found in the cytoplasm. The catalysed reaction is (6S)-NADHX + ATP = ADP + phosphate + NADH + H(+). The enzyme catalyses (6S)-NADPHX + ATP = ADP + phosphate + NADPH + H(+). In terms of biological role, catalyzes the dehydration of the S-form of NAD(P)HX at the expense of ATP, which is converted to ADP. Together with NAD(P)HX epimerase, which catalyzes the epimerization of the S- and R-forms, the enzyme allows the repair of both epimers of NAD(P)HX, a damaged form of NAD(P)H that is a result of enzymatic or heat-dependent hydration. This chain is ATP-dependent (S)-NAD(P)H-hydrate dehydratase, found in Arabidopsis thaliana (Mouse-ear cress).